The sequence spans 579 residues: Capsid vertex component 2 (579 aa).

Residues 1 to 50 (MTARYGFGSISFPNKCGIFLSTTKNFIAPNFPIHYWTAPAFELRGRMNPD) are interaction with major capsid protein/MCP.

It belongs to the herpesviridae CVC2 protein family. Heterodimerizes with CVC1. Interacts with major capsid protein/MCP and triplex capsid protein 1/TRX1 at the pentamer vertices. Interacts with the large tegument protein/LTP.

It localises to the virion. It is found in the host nucleus. Capsid vertex-specific component that plays a role during viral DNA encapsidation, assuring correct genome cleavage and presumably stabilizing capsids that contain full-length viral genomes. Participates in the interaction between the capsid and the tegument through interaction with the large tegument protein/LTP. This is Capsid vertex component 2 from Homo sapiens (Human).